A 359-amino-acid polypeptide reads, in one-letter code: MAPFIPSSHTAIIQHDDAGGVKITPGLPLPVLEPGQVLVKTAAVALNPCDFKMPQRFSQAGTYNGCDYAGTVVQLTEEVEKNGLLKVGDRIFAACVGNNPHDKDSGSFAEYLKGTAKFCWKIPDWMSFEEAAGLSGTCIATACMSLFQSLKLPGTFEEPATKPLDVLIWGGASSVGTTMIQMVKLLGHRAITTCSPKNFELVKSYGADAVFDYRSPTCAADIKKLTRNSLKYVVDPFSDLRTMALADEAMGRSGGKYVALESYQDTHDKKSKLIERELIMGQMILGRAIKLPGDYGKPENPEMGRWGVECYKSVQRLVDDRKLRPHPLRILDGGLEAILDGLEMLKRREVAAEKIVVRL.

49 to 52 contacts NADP(+); it reads CDFK. 137–144 lines the substrate pocket; the sequence is TCIATACM. Residues 195-198, Tyr-213, and 260-261 contribute to the NADP(+) site; these read SPKN and LE. Residue 281–285 coordinates substrate; sequence GQMIL. Position 350 to 351 (350 to 351) interacts with NADP(+); sequence VA.

This sequence belongs to the zinc-containing alcohol dehydrogenase family. As to quaternary structure, monomer.

Its pathway is secondary metabolite biosynthesis. In terms of biological role, trans-enoyl reductase; part of the gene cluster that mediates the biosynthesis of a tyrosine-derived cytochalasan acting as a fungal signal recognized by resistant rice plants and leads to avirulence in Pi33 resistant rice cultivars. The first step in the pathway is catalyzed by the hybrid PKS-NRPS ACE1, assisted by the enoyl reductase RAP1, that are responsible for fusion of the tyrosine precursor and the polyketide backbone. The polyketide synthase module (PKS) of ACE1 is responsible for the synthesis of the polyketide backbone and the downstream nonribosomal peptide synthetase (NRPS) amidates the carboxyl end of the polyketide with the tyrosine precursor. Because ACE1 lacks a designated enoylreductase (ER) domain, the required activity is provided the enoyl reductase RAP1. Reduction by the hydrolyase ORFZ, followed by dehydration and intra-molecular Diels-Alder cyclization by the Diels-Alderase ORF3 then yield the required isoindolone-fused macrocycle. A number of oxidative steps catalyzed by the tailoring enzymes identified within the cluster, including cytochrome P450 monooxygenases CYP1 to CYP4, the FAD-linked oxidoreductase OXR2 and the short-chain dehydrogenase/reductase OXR1, are further required to afford the final cytochalasans that confer avirulence and which have still to be identified. The monooxygenase CYP1 has been shown to be a site-selective C-18 hydroxylase whereas the function of CYP3 is the site-selective epoxidation of the C-6/C-7 olefin that is present in some intermediate compounds. Finally, SYN2 and RAP2 are not required for avirulence in Pi33 resistant rice cultivars. The protein is Trans-enoyl reductase RAP1 of Pyricularia oryzae (strain 70-15 / ATCC MYA-4617 / FGSC 8958) (Rice blast fungus).